The following is a 952-amino-acid chain: Germ layers disorganized gldi-3 (952 aa).

The FHA domain occupies 39-100 (KSFGRATTND…NGTYINDRRL (62 aa)). Disordered regions lie at residues 174 to 220 (IGPR…MPST), 483 to 639 (GTPK…ESTV), and 652 to 866 (AAQS…KERC). Polar residues-rich tracts occupy residues 179–195 (PSTT…STNG) and 202–220 (NRAS…MPST). Over residues 523 to 537 (EESEILDVVGTDEPD) the composition is skewed to acidic residues. A compositionally biased stretch (basic and acidic residues) spans 553–568 (PEDHGRQTQNKIDKNV). Polar residues-rich tracts occupy residues 569–584 (RMSS…TPSA) and 600–620 (VTSS…NPVS). The segment covering 662–679 (SVSNTTSSTSASLTTSSV) has biased composition (low complexity). Over residues 685 to 706 (TSSKENTDQKRAVDDSSDESAR) the composition is skewed to basic and acidic residues. Low complexity predominate over residues 715-724 (SATPSSTPAE). The segment covering 725 to 742 (SSKRKQKDTSSRKMKQLD) has biased composition (basic and acidic residues). The span at 761 to 772 (TKRRDKARRSTR) shows a compositional bias: basic residues. Residues 789–800 (VEDEDETDDVQE) are compositionally biased toward acidic residues. 2 stretches are compositionally biased toward basic and acidic residues: residues 823–832 (IKERKTKDKD) and 856–866 (PPKTEPSKERC).

Its subcellular location is the nucleus. In terms of biological role, potential transcription factor that may play a role in the regulation of genes involved in cell cycle G1/S transition. May bind to regulatory elements of genes. The chain is Germ layers disorganized gldi-3 from Caenorhabditis elegans.